Here is a 4885-residue protein sequence, read N- to C-terminus: Centrosome-associated protein CEP530 (4885 aa).

The stretch at 1437 to 1528 (VAEYEAETRG…GREKDQLRSE (92 aa)) forms a coiled coil.

The protein localises to the cytoplasm. The protein resides in the cytoskeleton. Its subcellular location is the microtubule organizing center. It localises to the centrosome. In terms of biological role, required for proper nuclei segregation during the cell division. Plays a role in coordination of karyokinesis and cytokinesis during the tachyzoite cell cycle. The polypeptide is Centrosome-associated protein CEP530 (Toxoplasma gondii (strain ATCC 50611 / Me49)).